We begin with the raw amino-acid sequence, 316 residues long: Ribosomal RNA small subunit methyltransferase H (316 aa).

Residues Gly37 to His39, Asp56, Phe83, Asp106, and His113 contribute to the S-adenosyl-L-methionine site. The disordered stretch occupies residues Pro276–Glu316. The segment covering Lys302 to Glu316 has biased composition (basic and acidic residues).

Belongs to the methyltransferase superfamily. RsmH family.

It is found in the cytoplasm. It catalyses the reaction cytidine(1402) in 16S rRNA + S-adenosyl-L-methionine = N(4)-methylcytidine(1402) in 16S rRNA + S-adenosyl-L-homocysteine + H(+). In terms of biological role, specifically methylates the N4 position of cytidine in position 1402 (C1402) of 16S rRNA. The sequence is that of Ribosomal RNA small subunit methyltransferase H from Leptospira borgpetersenii serovar Hardjo-bovis (strain L550).